The sequence spans 569 residues: Myotubularin-related protein 9 (569 aa).

Residues 134–513 (GWSAFDLEQE…QCIKIWDRLF (380 aa)) form the Myotubularin phosphatase domain.

The protein belongs to the protein-tyrosine phosphatase family. Non-receptor class myotubularin subfamily. As to quaternary structure, heterodimer with lipid phosphatase mtm-6.

Its subcellular location is the cytoplasm. It localises to the membrane. Functionally, may act as a regulatory subunit for mtm-6. In association with phosphatase mtm-6, plays a role in endosome trafficking probably by regulating phosphatidylinositol-3-phosphate levels. Regulates fluid phase endocytosis in coelomocytes. Regulates posterior migration of QL neuroblast descendants and the anterior migration of QR neuroblast descendants and HSN neurons during larval development probably by controlling Wnt ligand secretion through the regulation of sorting receptor mig-14 trafficking. Involved in the formation of correct synapse number in DA9 motor neurons. The protein is Myotubularin-related protein 9 of Caenorhabditis elegans.